Consider the following 345-residue polypeptide: MKALVKTRPEPGLELVEVPDPVAGPNDVIVKVMRTGICGTDVHIDKWDGWAAKTVHTPLVLGHEFCGEIVELGSEVNDLEVGQFVSGEGHYVCGRCRACLAGKRHLCRNTQGIGYAVNGAYCQYFVMPAGNVWVHHIPDLDPDVAAIFDPFGNAVHTALQFPCLAEDVLVSGAGPIGIMAALVAQFQGARNVVVTDLSDERLELAQQLGLKNAVNVSREGLETVWDRFDMKEGFDIGLEMSGSGTALTSMIDNMTHGGRIALLGTPSTDITLDFSKIIFNMITIQGVTGRQIFETWYTMASLIRSGLDISGIITDRYPITEFREAFDVAGSGHGGKVVMNWECLD.

C38 contributes to the Zn(2+) binding site. Residues T40 and H43 each act as charge relay system in the active site. The Zn(2+) site is built by H63, E64, C93, C96, C99, and C107. Residues I176, D196, R201, 263–265 (LGT), and 287–288 (VT) contribute to the NAD(+) site.

It belongs to the zinc-containing alcohol dehydrogenase family. As to quaternary structure, homotetramer. Zn(2+) is required as a cofactor.

The protein localises to the cytoplasm. The catalysed reaction is L-threonine + NAD(+) = (2S)-2-amino-3-oxobutanoate + NADH + H(+). It functions in the pathway amino-acid degradation; L-threonine degradation via oxydo-reductase pathway; glycine from L-threonine: step 1/2. Its function is as follows. Catalyzes the NAD(+)-dependent oxidation of L-threonine to 2-amino-3-ketobutyrate. This Cutibacterium acnes (strain DSM 16379 / KPA171202) (Propionibacterium acnes) protein is L-threonine 3-dehydrogenase.